We begin with the raw amino-acid sequence, 336 residues long: UPF0284 protein Pcal_1534 (336 aa).

Belongs to the UPF0284 family.

The protein is UPF0284 protein Pcal_1534 of Pyrobaculum calidifontis (strain DSM 21063 / JCM 11548 / VA1).